The following is a 122-amino-acid chain: Small ribosomal subunit protein uS13 (122 aa).

A disordered region spans residues 94–122 (KGLPVRGQRTHTNARTRKGPRRAIAGKKK).

The protein belongs to the universal ribosomal protein uS13 family. In terms of assembly, part of the 30S ribosomal subunit. Forms a loose heterodimer with protein S19. Forms two bridges to the 50S subunit in the 70S ribosome.

Functionally, located at the top of the head of the 30S subunit, it contacts several helices of the 16S rRNA. In the 70S ribosome it contacts the 23S rRNA (bridge B1a) and protein L5 of the 50S subunit (bridge B1b), connecting the 2 subunits; these bridges are implicated in subunit movement. Contacts the tRNAs in the A and P-sites. In Syntrophus aciditrophicus (strain SB), this protein is Small ribosomal subunit protein uS13.